The following is a 1116-amino-acid chain: DNA-directed RNA polymerase subunit beta (1116 aa).

Basic and acidic residues predominate over residues 1070–1100 (KIREEEKEREKEREAREMEDPEKIVSKIDAK). The disordered stretch occupies residues 1070-1116 (KIREEEKEREKEREAREMEDPEKIVSKIDAKQKKKYKKTKKQTEKKK). Over residues 1101 to 1116 (QKKKYKKTKKQTEKKK) the composition is skewed to basic residues.

It belongs to the RNA polymerase beta chain family. As to quaternary structure, in plastids the minimal PEP RNA polymerase catalytic core is composed of four subunits: alpha, beta, beta', and beta''. When a (nuclear-encoded) sigma factor is associated with the core the holoenzyme is formed, which can initiate transcription.

Its subcellular location is the plastid. It localises to the chloroplast. The enzyme catalyses RNA(n) + a ribonucleoside 5'-triphosphate = RNA(n+1) + diphosphate. DNA-dependent RNA polymerase catalyzes the transcription of DNA into RNA using the four ribonucleoside triphosphates as substrates. The polypeptide is DNA-directed RNA polymerase subunit beta (Heterosigma akashiwo (Chromophytic alga)).